The chain runs to 89 residues: Small ribosomal subunit protein uS15 (89 aa).

Belongs to the universal ribosomal protein uS15 family. Part of the 30S ribosomal subunit. Forms a bridge to the 50S subunit in the 70S ribosome, contacting the 23S rRNA.

Functionally, one of the primary rRNA binding proteins, it binds directly to 16S rRNA where it helps nucleate assembly of the platform of the 30S subunit by binding and bridging several RNA helices of the 16S rRNA. Forms an intersubunit bridge (bridge B4) with the 23S rRNA of the 50S subunit in the ribosome. The protein is Small ribosomal subunit protein uS15 of Salinispora tropica (strain ATCC BAA-916 / DSM 44818 / JCM 13857 / NBRC 105044 / CNB-440).